The sequence spans 171 residues: ATP synthase subunit b (171 aa).

A helical membrane pass occupies residues 19–39 (VGVGLILFIAIVIWAKAPAMI).

It belongs to the ATPase B chain family. As to quaternary structure, F-type ATPases have 2 components, F(1) - the catalytic core - and F(0) - the membrane proton channel. F(1) has five subunits: alpha(3), beta(3), gamma(1), delta(1), epsilon(1). F(0) has three main subunits: a(1), b(2) and c(10-14). The alpha and beta chains form an alternating ring which encloses part of the gamma chain. F(1) is attached to F(0) by a central stalk formed by the gamma and epsilon chains, while a peripheral stalk is formed by the delta and b chains.

It localises to the cell inner membrane. In terms of biological role, f(1)F(0) ATP synthase produces ATP from ADP in the presence of a proton or sodium gradient. F-type ATPases consist of two structural domains, F(1) containing the extramembraneous catalytic core and F(0) containing the membrane proton channel, linked together by a central stalk and a peripheral stalk. During catalysis, ATP synthesis in the catalytic domain of F(1) is coupled via a rotary mechanism of the central stalk subunits to proton translocation. Functionally, component of the F(0) channel, it forms part of the peripheral stalk, linking F(1) to F(0). The chain is ATP synthase subunit b from Caulobacter sp. (strain K31).